The following is a 481-amino-acid chain: uncharacterized protein (481 aa).

Helical transmembrane passes span 30 to 50 (TIII…FVQF), 96 to 116 (AIAL…FIGM), 154 to 174 (CMAV…FNSV), 196 to 216 (ISLV…IAII), 220 to 240 (LVPM…GMHI), 250 to 270 (IVQS…ALVS), 311 to 331 (MLGV…IILL), 354 to 374 (IGEF…YSSI), 391 to 411 (KPWL…FGAV), and 424 to 444 (VMAV…PIVW).

Belongs to the alanine or glycine:cation symporter (AGCS) (TC 2.A.25) family.

Its subcellular location is the cell inner membrane. This is an uncharacterized protein from Haemophilus influenzae (strain ATCC 51907 / DSM 11121 / KW20 / Rd).